The sequence spans 452 residues: Ribosomal protein uS12 methylthiotransferase RimO (452 aa).

Residues Pro5 to Ser116 form the MTTase N-terminal domain. [4Fe-4S] cluster is bound by residues Cys14, Cys50, Cys79, Cys154, Cys158, and Cys161. The Radical SAM core domain occupies Thr140–Arg369. A TRAM domain is found at Arg372–Ser438.

It belongs to the methylthiotransferase family. RimO subfamily. It depends on [4Fe-4S] cluster as a cofactor.

The protein localises to the cytoplasm. The enzyme catalyses L-aspartate(89)-[ribosomal protein uS12]-hydrogen + (sulfur carrier)-SH + AH2 + 2 S-adenosyl-L-methionine = 3-methylsulfanyl-L-aspartate(89)-[ribosomal protein uS12]-hydrogen + (sulfur carrier)-H + 5'-deoxyadenosine + L-methionine + A + S-adenosyl-L-homocysteine + 2 H(+). In terms of biological role, catalyzes the methylthiolation of an aspartic acid residue of ribosomal protein uS12. The polypeptide is Ribosomal protein uS12 methylthiotransferase RimO (Synechococcus elongatus (strain ATCC 33912 / PCC 7942 / FACHB-805) (Anacystis nidulans R2)).